The chain runs to 416 residues: S-adenosylmethionine synthase (416 aa).

His14 is an ATP binding site. A Mg(2+)-binding site is contributed by Asp16. Glu42 provides a ligand contact to K(+). Glu55 and Gln98 together coordinate L-methionine. A flexible loop region spans residues 98-108; it reads QSPDIARGVDT. ATP contacts are provided by residues 173–175, 249–250, Asp258, 264–265, Ala281, and Lys285; these read DGK, KF, and RK. Residue Asp258 participates in L-methionine binding. Lys289 contacts L-methionine.

This sequence belongs to the AdoMet synthase family. In terms of assembly, homotetramer; dimer of dimers. The cofactor is Mg(2+). Requires K(+) as cofactor.

The protein localises to the cytoplasm. It carries out the reaction L-methionine + ATP + H2O = S-adenosyl-L-methionine + phosphate + diphosphate. The protein operates within amino-acid biosynthesis; S-adenosyl-L-methionine biosynthesis; S-adenosyl-L-methionine from L-methionine: step 1/1. In terms of biological role, catalyzes the formation of S-adenosylmethionine (AdoMet) from methionine and ATP. The overall synthetic reaction is composed of two sequential steps, AdoMet formation and the subsequent tripolyphosphate hydrolysis which occurs prior to release of AdoMet from the enzyme. This Thermosynechococcus vestitus (strain NIES-2133 / IAM M-273 / BP-1) protein is S-adenosylmethionine synthase.